Here is a 244-residue protein sequence, read N- to C-terminus: L-xylulose reductase (244 aa).

The residue at position 1 (M1) is an N-acetylmethionine. 11-39 is a binding site for NADP(+); sequence LVTGAGKGIGRSTVLALQAAGAHVVAVSR. Omega-N-methylarginine is present on R21. S46 is modified (phosphoserine). S136 contacts substrate. The active-site Proton acceptor is Y149. K153 is an active-site residue.

It belongs to the short-chain dehydrogenases/reductases (SDR) family. As to quaternary structure, homotetramer. As to expression, highly expressed in kidney and liver. Expressed in epididymis. Weakly expressed in brain, heart, lung, spleen and testis.

It is found in the membrane. Its subcellular location is the cytoplasmic vesicle. The protein localises to the secretory vesicle. It localises to the acrosome. It carries out the reaction xylitol + NADP(+) = L-xylulose + NADPH + H(+). Functionally, catalyzes the NADPH-dependent reduction of several pentoses, tetroses, trioses, alpha-dicarbonyl compounds and L-xylulose. Participates in the uronate cycle of glucose metabolism. May play a role in the water absorption and cellular osmoregulation in the proximal renal tubules by producing xylitol, an osmolyte, thereby preventing osmolytic stress from occurring in the renal tubules. The chain is L-xylulose reductase (DCXR) from Mesocricetus auratus (Golden hamster).